A 258-amino-acid polypeptide reads, in one-letter code: Synapse differentiation-inducing gene protein 1-like (258 aa).

Topologically, residues 1–182 (MESLSELQNP…FIVIPPRDHL (182 aa)) are extracellular. A helical membrane pass occupies residues 183–203 (GLAIFSMLCCFWPLGIAAFYF). Over 204–228 (SQGTSKAVTKGDFPLASIASRRALF) the chain is Cytoplasmic. A helical membrane pass occupies residues 229–249 (LAALSITIGTGVYVGVVVALI). Over 250 to 258 (AYLSKPGHI) the chain is Extracellular.

It belongs to the CD225/Dispanin family.

It localises to the membrane. Its subcellular location is the golgi apparatus. The protein resides in the cis-Golgi network. The protein is Synapse differentiation-inducing gene protein 1-like (syndig1l) of Danio rerio (Zebrafish).